A 485-amino-acid polypeptide reads, in one-letter code: Telomeric DNA-binding factor trf1 (485 aa).

Residues 1-20 show a composition bias toward basic and acidic residues; it reads MSKRSLDPSDDFKGQKRLAI. Residues 1 to 23 form a disordered region; the sequence is MSKRSLDPSDDFKGQKRLAIDPE. An HTH myb-type domain is found at 400–457; the sequence is RRVANRRSWTKEEEEALLDGLDLVKGPRWSQILELYGPGGKKSEVLKYRNQVQLKDKA. The H-T-H motif DNA-binding region spans 428–453; the sequence is WSQILELYGPGGKKSEVLKYRNQVQL.

As to quaternary structure, homodimer.

It localises to the nucleus. Binds the telomeric double-stranded TTACAGG repeat and regulates telomere length. This is Telomeric DNA-binding factor trf1 (trf1) from Schizosaccharomyces pombe (strain 972 / ATCC 24843) (Fission yeast).